A 161-amino-acid polypeptide reads, in one-letter code: Protein PLASTID TRANSCRIPTIONALLY ACTIVE 7 (161 aa).

Residues 1-32 constitute a chloroplast transit peptide; it reads MASFTCSSPSSILPIIDTRSGNLRCTFQSQVS.

In terms of assembly, component of the transcriptionally active chromosome (TAC) complexes. Interacts with FLN1, PTAC10, PTAC12/HMR/PAP5 and PTAC14. Binds to SL1/MTERF3. In terms of tissue distribution, mostly expressed in leaves, flowers and seedlings, and, to a lower extent, in roots and stems.

It localises to the plastid. It is found in the chloroplast. Functionally, essential for chloroplast development, especially for thylakoid formation. Involved in plastid gene expression, probably by maintaining plastid-encoded RNA polymerase (PEP) activity. The polypeptide is Protein PLASTID TRANSCRIPTIONALLY ACTIVE 7 (Arabidopsis thaliana (Mouse-ear cress)).